Here is a 319-residue protein sequence, read N- to C-terminus: MPRPGRNTYSDQKPPYSYISLTAMAIQGSQEKMLPLSEIYKFIMDRFPYYRENTQRWQNSLRHNLSFNDCFIKIPRRPDQPGKGSFWALHPRCGDMFENGSFLRRRKRFKVMKSDHLAPSKASDAAQYLQQQAKLRLSALAASGTHLPPMSTYNLGVSPTSSFKHPFAIENIIAREYKMPGGLAFSTMQPMPAAYPLHNQLTTVGGSIGTGWPHMYSSSMLDSTTPISMANSDYSVSAYGVPIKPICHGAQTLLPAIPVPIKPTAALPALPTHIPAILSNSSPSMSPTSPQTATSQSSPATPSDTLTNPSTALLSVAVH.

The segment at residues 13–107 (KPPYSYISLT…ENGSFLRRRK (95 aa)) is a DNA-binding region (fork-head). The tract at residues 278 to 310 (LSNSSPSMSPTSPQTATSQSSPATPSDTLTNPS) is disordered. Positions 279–305 (SNSSPSMSPTSPQTATSQSSPATPSDT) are enriched in low complexity.

In early gastrulae, expressed in the inner layer of the posterior dorsal ectoderm and in non-involuted mesoderm. By the mid-gastrula stage, expressed solely in the posterior ectoderm. At the end of gastrulation, expressed in ectodermal regions fated to become diencephalon, midbrain and hindbrain, and weakly expressed in regions fated to become spinal cord and tailbud. At the neurula stage, expressed in the midbrain and posterior forebrain (diencephalon) but not in the more anterior forebrain (telencephalon). Also expressed posteriorly in rhombomere 5. At tailbud stages, expression remains in the anterior brain and is also detectable along the length of the central nervous system and in the tailbud.

The protein resides in the nucleus. In terms of biological role, probable transcription factor. May be involved in the early anteroposterior patterning of the neuroectoderm. The polypeptide is Forkhead box protein B1 (Xenopus laevis (African clawed frog)).